The chain runs to 1128 residues: Major DNA-binding protein (1128 aa).

A required for nuclear localization region spans residues 1104–1128; the sequence is LGGGGQGSGGRRKRRLATVLPGLEV.

Belongs to the herpesviridae major DNA-binding protein family. In terms of assembly, homooligomers. Forms double-helical filaments necessary for the formation of replication compartments within the host nucleus. Interacts with the origin-binding protein. Interacts with the helicase primase complex; this interaction stimulates primer synthesis activity of the helicase-primase complex. Interacts with the DNA polymerase. Interacts with the alkaline exonuclease; this interaction increases its nuclease processivity.

It localises to the virion tegument. It is found in the host nucleus. Functionally, plays several crucial roles in viral infection. Participates in the opening of the viral DNA origin to initiate replication by interacting with the origin-binding protein. May disrupt loops, hairpins and other secondary structures present on ssDNA to reduce and eliminate pausing of viral DNA polymerase at specific sites during elongation. Promotes viral DNA recombination by performing strand-transfer, characterized by the ability to transfer a DNA strand from a linear duplex to a complementary single-stranded DNA circle. Can also catalyze the renaturation of complementary single strands. Additionally, reorganizes the host cell nucleus, leading to the formation of prereplicative sites and replication compartments. This process is driven by the protein which can form double-helical filaments in the absence of DNA. The polypeptide is Major DNA-binding protein (Homo sapiens (Human)).